The sequence spans 304 residues: Acetylglutamate kinase (304 aa).

Substrate is bound by residues 64 to 65 (GG), arginine 86, and asparagine 181.

Belongs to the acetylglutamate kinase family. ArgB subfamily.

The protein resides in the plastid. It is found in the chloroplast. It catalyses the reaction N-acetyl-L-glutamate + ATP = N-acetyl-L-glutamyl 5-phosphate + ADP. It participates in amino-acid biosynthesis; L-arginine biosynthesis; N(2)-acetyl-L-ornithine from L-glutamate: step 2/4. In terms of biological role, catalyzes the ATP-dependent phosphorylation of N-acetyl-L-glutamate. The polypeptide is Acetylglutamate kinase (Cyanidium caldarium (Red alga)).